Here is a 354-residue protein sequence, read N- to C-terminus: tRNA N6-adenosine threonylcarbamoyltransferase (354 aa).

Fe cation is bound by residues histidine 111 and histidine 115. Substrate-binding positions include 134–138 (LVSGG), aspartate 167, glycine 180, and asparagine 279. Aspartate 319 is a binding site for Fe cation.

This sequence belongs to the KAE1 / TsaD family. The cofactor is Fe(2+).

Its subcellular location is the cytoplasm. The enzyme catalyses L-threonylcarbamoyladenylate + adenosine(37) in tRNA = N(6)-L-threonylcarbamoyladenosine(37) in tRNA + AMP + H(+). In terms of biological role, required for the formation of a threonylcarbamoyl group on adenosine at position 37 (t(6)A37) in tRNAs that read codons beginning with adenine. Is involved in the transfer of the threonylcarbamoyl moiety of threonylcarbamoyl-AMP (TC-AMP) to the N6 group of A37, together with TsaE and TsaB. TsaD likely plays a direct catalytic role in this reaction. In Neisseria meningitidis, this protein is tRNA N6-adenosine threonylcarbamoyltransferase.